The primary structure comprises 151 residues: UPF0208 membrane protein PC1_2779 (151 aa).

The next 2 helical transmembrane spans lie at Phe-46–Gly-66 and Leu-69–Trp-89.

Belongs to the UPF0208 family.

The protein resides in the cell inner membrane. The polypeptide is UPF0208 membrane protein PC1_2779 (Pectobacterium carotovorum subsp. carotovorum (strain PC1)).